A 514-amino-acid polypeptide reads, in one-letter code: ATP synthase subunit alpha (514 aa).

170–177 (GDRQTGKT) is a binding site for ATP.

This sequence belongs to the ATPase alpha/beta chains family. F-type ATPases have 2 components, CF(1) - the catalytic core - and CF(0) - the membrane proton channel. CF(1) has five subunits: alpha(3), beta(3), gamma(1), delta(1), epsilon(1). CF(0) has three main subunits: a(1), b(2) and c(9-12). The alpha and beta chains form an alternating ring which encloses part of the gamma chain. CF(1) is attached to CF(0) by a central stalk formed by the gamma and epsilon chains, while a peripheral stalk is formed by the delta and b chains.

It is found in the cell inner membrane. It carries out the reaction ATP + H2O + 4 H(+)(in) = ADP + phosphate + 5 H(+)(out). Functionally, produces ATP from ADP in the presence of a proton gradient across the membrane. The alpha chain is a regulatory subunit. The sequence is that of ATP synthase subunit alpha from Psychrobacter arcticus (strain DSM 17307 / VKM B-2377 / 273-4).